A 339-amino-acid chain; its full sequence is MYVVIINIVLLKVLMVLTITILSGGFSRERKISLMSGKAVKKALDSLSYNAIEIDVNSNTAEKLKKINPDLAFIALHGPYGEDGCIQGLLEILGIKYTHSGVMASAIAMNKAMSKHIFRSLGIDTPKGYIISRGDILKNNIKIDYPYVLKPINEGSSIGVHITFSHEDYLKLKNMFSVIPVHDAGIEEEEPVWITRDLMIIEEYIPGIELHTAVLLDEAAGTMEIRPKNKFYDYKAKYTNGFAEHIFPAEIPDNIYEMTLEHALKVHRFLGCKTISRSDFRYNPKDNTLKMLEINTHPGFTELSLVPEIAKLTKGIDFNELVKIIIEDSLQHKKILEIK.

The region spanning 115–327 (KHIFRSLGID…FNELVKIIIE (213 aa)) is the ATP-grasp domain. 142-211 (KIDYPYVLKP…EEYIPGIELH (70 aa)) contributes to the ATP binding site. Mg(2+) contacts are provided by Asp-279, Glu-293, and Asn-295.

Belongs to the D-alanine--D-alanine ligase family. Mg(2+) serves as cofactor. It depends on Mn(2+) as a cofactor.

The protein resides in the cytoplasm. It carries out the reaction 2 D-alanine + ATP = D-alanyl-D-alanine + ADP + phosphate + H(+). It participates in cell wall biogenesis; peptidoglycan biosynthesis. Cell wall formation. This Wolbachia sp. subsp. Brugia malayi (strain TRS) protein is D-alanine--D-alanine ligase.